The chain runs to 244 residues: Small ribosomal subunit protein eS4 (244 aa).

The 64-residue stretch at 43–106 (LPLLLVVRDV…DENYLVLFDE (64 aa)) folds into the S4 RNA-binding domain.

Belongs to the eukaryotic ribosomal protein eS4 family.

The sequence is that of Small ribosomal subunit protein eS4 from Methanococcus maripaludis (strain C7 / ATCC BAA-1331).